The sequence spans 99 residues: Spore coat protein F-like protein YraD (99 aa).

It belongs to the CotF family.

It localises to the spore coat. The chain is Spore coat protein F-like protein YraD (yraD) from Bacillus subtilis (strain 168).